Reading from the N-terminus, the 96-residue chain is MTNPHDIIIKPIITENSMDDMASKKYTFAVNKKANKIQVKQAVEAVFGVKVEKVNTMNMIGKVKRMGAKEGKRADWKKAIVTLRPDSKEIEFFEGM.

The protein belongs to the universal ribosomal protein uL23 family. As to quaternary structure, part of the 50S ribosomal subunit. Contacts protein L29, and trigger factor when it is bound to the ribosome.

Functionally, one of the early assembly proteins it binds 23S rRNA. One of the proteins that surrounds the polypeptide exit tunnel on the outside of the ribosome. Forms the main docking site for trigger factor binding to the ribosome. This is Large ribosomal subunit protein uL23 from Alkaliphilus oremlandii (strain OhILAs) (Clostridium oremlandii (strain OhILAs)).